The following is a 284-amino-acid chain: D-tagatose-1,6-bisphosphate aldolase subunit GatY (284 aa).

The active-site Proton donor is the aspartate 82. Histidine 83 and histidine 180 together coordinate Zn(2+). Glycine 181 is a dihydroxyacetone phosphate binding site. Residue histidine 208 participates in Zn(2+) binding. Residues 209-211 and 230-233 contribute to the dihydroxyacetone phosphate site; these read GAS and NVAT.

This sequence belongs to the class II fructose-bisphosphate aldolase family. TagBP aldolase GatY subfamily. As to quaternary structure, forms a complex with GatZ. It depends on Zn(2+) as a cofactor.

The catalysed reaction is D-tagatofuranose 1,6-bisphosphate = D-glyceraldehyde 3-phosphate + dihydroxyacetone phosphate. The protein operates within carbohydrate metabolism; D-tagatose 6-phosphate degradation; D-glyceraldehyde 3-phosphate and glycerone phosphate from D-tagatose 6-phosphate: step 2/2. In terms of biological role, catalytic subunit of the tagatose-1,6-bisphosphate aldolase GatYZ, which catalyzes the reversible aldol condensation of dihydroxyacetone phosphate (DHAP or glycerone-phosphate) with glyceraldehyde 3-phosphate (G3P) to produce tagatose 1,6-bisphosphate (TBP). Requires GatZ subunit for full activity and stability. Is involved in the catabolism of galactitol. The sequence is that of D-tagatose-1,6-bisphosphate aldolase subunit GatY from Escherichia coli O8 (strain IAI1).